Consider the following 124-residue polypeptide: Small polypeptide ROTUNDIFOLIA LIKE 3 (124 aa).

The interval M1–S23 is disordered. 2 N-linked (GlcNAc...) asparagine glycosylation sites follow: N35 and N38. A helical transmembrane segment spans residues A59–S75. Positions W60–K95 are disordered. Low complexity predominate over residues S71–Q91. N88 carries an N-linked (GlcNAc...) asparagine glycan. The interval R92–Y124 is required for DVL/RTFL small polypeptide activity.

This sequence belongs to the DVL/RTFL small polypeptides family.

Its subcellular location is the cell membrane. In terms of biological role, small polypeptide acting as a regulatory molecule which coordinates cellular responses required for differentiation, growth and development, probably by restricting polar cell proliferation in lateral organs (e.g. leaves and petioles). This is Small polypeptide ROTUNDIFOLIA LIKE 3 from Oryza sativa subsp. japonica (Rice).